The following is a 97-amino-acid chain: Large ribosomal subunit protein bL27 (97 aa).

Residues 1-12 (MLNLNLANLQFM) constitute a propeptide that is removed on maturation. The tract at residues 15 to 37 (KKGGGSTSNGRDSQAKRLGAKAA) is disordered.

This sequence belongs to the bacterial ribosomal protein bL27 family. The N-terminus is cleaved by ribosomal processing cysteine protease Prp.

The chain is Large ribosomal subunit protein bL27 from Streptococcus suis (strain 98HAH33).